Consider the following 214-residue polypeptide: Orotate phosphoribosyltransferase (214 aa).

5-phospho-alpha-D-ribose 1-diphosphate-binding positions include Arg-125, Lys-126, Lys-129, His-131, and 151-159 (EDTSTTGNS). Positions 155 and 183 each coordinate orotate.

Belongs to the purine/pyrimidine phosphoribosyltransferase family. PyrE subfamily. Homodimer. Mg(2+) is required as a cofactor.

It catalyses the reaction orotidine 5'-phosphate + diphosphate = orotate + 5-phospho-alpha-D-ribose 1-diphosphate. The protein operates within pyrimidine metabolism; UMP biosynthesis via de novo pathway; UMP from orotate: step 1/2. Catalyzes the transfer of a ribosyl phosphate group from 5-phosphoribose 1-diphosphate to orotate, leading to the formation of orotidine monophosphate (OMP). The sequence is that of Orotate phosphoribosyltransferase from Tropheryma whipplei (strain Twist) (Whipple's bacillus).